The chain runs to 173 residues: NADH-ubiquinone oxidoreductase chain 6 (173 aa).

The next 5 helical transmembrane spans lie at 1-21 (MTYF…AVAS), 27-47 (YGVV…LSLG), 48-68 (VSFV…VVFV), 87-107 (VVGY…VGGL), and 139-159 (CGVG…FVVL).

This sequence belongs to the complex I subunit 6 family.

The protein localises to the mitochondrion membrane. The catalysed reaction is a ubiquinone + NADH + 5 H(+)(in) = a ubiquinol + NAD(+) + 4 H(+)(out). In terms of biological role, core subunit of the mitochondrial membrane respiratory chain NADH dehydrogenase (Complex I) that is believed to belong to the minimal assembly required for catalysis. Complex I functions in the transfer of electrons from NADH to the respiratory chain. The immediate electron acceptor for the enzyme is believed to be ubiquinone. This Larus canus (Common gull) protein is NADH-ubiquinone oxidoreductase chain 6 (MT-ND6).